A 164-amino-acid polypeptide reads, in one-letter code: Endoribonuclease YbeY (164 aa).

Zn(2+)-binding residues include His-117, His-121, and His-127.

It belongs to the endoribonuclease YbeY family. Zn(2+) is required as a cofactor.

The protein resides in the cytoplasm. Functionally, single strand-specific metallo-endoribonuclease involved in late-stage 70S ribosome quality control and in maturation of the 3' terminus of the 16S rRNA. This chain is Endoribonuclease YbeY, found in Mycoplasma capricolum subsp. capricolum (strain California kid / ATCC 27343 / NCTC 10154).